A 460-amino-acid polypeptide reads, in one-letter code: MFS-type transporter PUL3 (460 aa).

Transmembrane regions (helical) follow at residues 16–36 (AVTLIAVQFSFDTCVYLSSVV), 50–70 (YLFILQAVSAAVQVFFSFIIG), 81–101 (WVIIFLYFLSFVGNFLYSCAG), 113–133 (IICGAASSSGAVVYSYITAIS), 151–171 (GICMALAQLVAILFALCDFTV), 181–201 (APTFASSFIILLICVLLMFVL), 240–260 (MFLSTFFMCEVLYFMPIFLTL), and 271–291 (VAFMVSAVLGVAGSFFAPDLV). The disordered stretch occupies residues 300-323 (PSTQDETDTSDNDKIEKEESEQKS). Residues 310–323 (DNDKIEKEESEQKS) show a composition bias toward basic and acidic residues. Helical transmembrane passes span 333–353 (VSLTIFALFVALIGQAFMIGA), 369–389 (IFFTAGLSITMLGYNFMGSSV), 408–428 (FIGAIAGVGKLVAPIVLAALY), and 433–453 (GLPIGVGFGMILVGISIPSLV).

This sequence belongs to the major facilitator superfamily. TCR/Tet family.

Its subcellular location is the cell membrane. Its function is as follows. MFS-type transporer required for the uptake of iron via the uptake of the siderophore pulcherrimin-iron complex. The protein is MFS-type transporter PUL3 of Kluyveromyces lactis (strain ATCC 8585 / CBS 2359 / DSM 70799 / NBRC 1267 / NRRL Y-1140 / WM37) (Yeast).